The primary structure comprises 171 residues: MATRQSSYNYEEILSCGRGELFGPGNAQLPLPPMLMVHRITEISETGGAFDKGFIRAEYDVSPDDWYFPCHFQGNPIMPGCLGLDGMWQLTGFFLGWLGEEGRGMALSTGEVKFKGMVRPNTKLLQYGIDFKRVMRGRLVLGTADGWLKADGETIYQASDLRVGLSKEKAA.

His71 is a catalytic residue.

This sequence belongs to the thioester dehydratase family. FabA subfamily. In terms of assembly, homodimer.

Its subcellular location is the cytoplasm. It carries out the reaction a (3R)-hydroxyacyl-[ACP] = a (2E)-enoyl-[ACP] + H2O. The enzyme catalyses (3R)-hydroxydecanoyl-[ACP] = (2E)-decenoyl-[ACP] + H2O. It catalyses the reaction (2E)-decenoyl-[ACP] = (3Z)-decenoyl-[ACP]. It functions in the pathway lipid metabolism; fatty acid biosynthesis. Functionally, necessary for the introduction of cis unsaturation into fatty acids. Catalyzes the dehydration of (3R)-3-hydroxydecanoyl-ACP to E-(2)-decenoyl-ACP and then its isomerization to Z-(3)-decenoyl-ACP. Can catalyze the dehydratase reaction for beta-hydroxyacyl-ACPs with saturated chain lengths up to 16:0, being most active on intermediate chain length. In Agrobacterium fabrum (strain C58 / ATCC 33970) (Agrobacterium tumefaciens (strain C58)), this protein is 3-hydroxydecanoyl-[acyl-carrier-protein] dehydratase.